Reading from the N-terminus, the 87-residue chain is Acyl-CoA-binding protein (87 aa).

The 86-residue stretch at 2-87 folds into the ACB domain; the sequence is VSQLFEEKAK…VDQLIAKYSS (86 aa). Residues 29-33, K51, and K55 each bind an acyl-CoA; that span reads YALYK. A Glycyl lysine isopeptide (Lys-Gly) (interchain with G-Cter in ubiquitin) cross-link involves residue K51. A Glycyl lysine isopeptide (Lys-Gly) (interchain with G-Cter in ubiquitin) cross-link involves residue K72. Y74 contacts an acyl-CoA.

The protein belongs to the ACBP family.

Binds medium- and long-chain acyl-CoA esters with very high affinity and may function as an intracellular carrier of acyl-CoA esters. Enhances the in vitro activity of the ceramide synthase complex. The sequence is that of Acyl-CoA-binding protein (ACB1) from Saccharomyces cerevisiae (strain ATCC 204508 / S288c) (Baker's yeast).